Reading from the N-terminus, the 683-residue chain is MAETKPTYYITTPIYYPSGKLHIGNSYTTIACDTLARYKRAMGYDVYFLTGTDEHGLKIEEKAEKLNTDPKSYVDGMAKQIKDLWQLLEISNDKFIRTTDDYHERAVQEIFDRLLKNGDIYLGEYEGWYSVDDEEYFTETQLAEVFRDDNGKVIGGKAPSGHEVELVKEQSYFFKMSKYADWLLDYYQSHPDFIEPANRMTEMINNFIKPGLEDLAVSRTSFTWGVPVKSDPKHVVYVWIDALTNYITALGYATGDSEDLFNKFWPADVQMVGKEIVRFHTIYWPIILHALGLPLPKKVFGHGWLLMKDGKMSKSKGNVIYPETLVERYGLDALRYYLVKAMPYGNDGLFTPEDFVARVNYDLANDLGNLLNRTIAMINKYEDGQLPAFKAGVTEFDADLEATAATTIKNFNACMDSLHLSDALAEVWKLVSRTNKYIDETAPWQLAKSDDANDADKLASVMAHLAASLRVIASLISPVMTHAPKEIFTQLGLDPATLAIADLQLADLPAGAQVVAKGTPIFPRVDMDAEVEFLKGKMTKSDKQKGRKAMENAKHEAEVEQGWNPAETNLNLTKPAITIDDFDKVELKVAEVITVQKLKGADKLLQFRLDAGDADHRQILSGIAKWYPEPEELIGKKVIIVGNLKPRKLRGEMSQGMLLSAEHDGQVQLITVPDNMVNGSLIS.

The 'HIGH' region motif lies at 15-25 (YYPSGKLHIGN). Positions 311–315 (KMSKS) match the 'KMSKS' region motif. Lysine 314 contacts ATP. The region spanning 581 to 683 (DFDKVELKVA…DNMVNGSLIS (103 aa)) is the tRNA-binding domain.

This sequence belongs to the class-I aminoacyl-tRNA synthetase family. MetG type 2B subfamily. In terms of assembly, homodimer.

It localises to the cytoplasm. The enzyme catalyses tRNA(Met) + L-methionine + ATP = L-methionyl-tRNA(Met) + AMP + diphosphate. Its function is as follows. Is required not only for elongation of protein synthesis but also for the initiation of all mRNA translation through initiator tRNA(fMet) aminoacylation. This Lactiplantibacillus plantarum (strain ATCC BAA-793 / NCIMB 8826 / WCFS1) (Lactobacillus plantarum) protein is Methionine--tRNA ligase.